A 237-amino-acid chain; its full sequence is Ribonuclease PH (237 aa).

Phosphate-binding positions include arginine 86 and 124 to 126 (GTR).

It belongs to the RNase PH family. Homohexameric ring arranged as a trimer of dimers.

It catalyses the reaction tRNA(n+1) + phosphate = tRNA(n) + a ribonucleoside 5'-diphosphate. Functionally, phosphorolytic 3'-5' exoribonuclease that plays an important role in tRNA 3'-end maturation. Removes nucleotide residues following the 3'-CCA terminus of tRNAs; can also add nucleotides to the ends of RNA molecules by using nucleoside diphosphates as substrates, but this may not be physiologically important. Probably plays a role in initiation of 16S rRNA degradation (leading to ribosome degradation) during starvation. This is Ribonuclease PH from Zymomonas mobilis subsp. mobilis (strain ATCC 31821 / ZM4 / CP4).